The chain runs to 295 residues: Pyridoxal 5'-phosphate synthase subunit PdxS (295 aa).

D-ribose 5-phosphate is bound at residue Asp-25. Residue Lys-82 is the Schiff-base intermediate with D-ribose 5-phosphate of the active site. Position 154 (Gly-154) interacts with D-ribose 5-phosphate. Arg-166 provides a ligand contact to D-glyceraldehyde 3-phosphate. D-ribose 5-phosphate-binding positions include Gly-215 and 236-237 (GS).

It belongs to the PdxS/SNZ family. In terms of assembly, in the presence of PdxT, forms a dodecamer of heterodimers.

The catalysed reaction is aldehydo-D-ribose 5-phosphate + D-glyceraldehyde 3-phosphate + L-glutamine = pyridoxal 5'-phosphate + L-glutamate + phosphate + 3 H2O + H(+). It functions in the pathway cofactor biosynthesis; pyridoxal 5'-phosphate biosynthesis. Its function is as follows. Catalyzes the formation of pyridoxal 5'-phosphate from ribose 5-phosphate (RBP), glyceraldehyde 3-phosphate (G3P) and ammonia. The ammonia is provided by the PdxT subunit. Can also use ribulose 5-phosphate and dihydroxyacetone phosphate as substrates, resulting from enzyme-catalyzed isomerization of RBP and G3P, respectively. In Bacillus cereus (strain G9842), this protein is Pyridoxal 5'-phosphate synthase subunit PdxS.